The sequence spans 187 residues: Elongation factor P (187 aa).

The protein belongs to the elongation factor P family.

The protein resides in the cytoplasm. The protein operates within protein biosynthesis; polypeptide chain elongation. In terms of biological role, involved in peptide bond synthesis. Stimulates efficient translation and peptide-bond synthesis on native or reconstituted 70S ribosomes in vitro. Probably functions indirectly by altering the affinity of the ribosome for aminoacyl-tRNA, thus increasing their reactivity as acceptors for peptidyl transferase. The sequence is that of Elongation factor P from Ruegeria pomeroyi (strain ATCC 700808 / DSM 15171 / DSS-3) (Silicibacter pomeroyi).